Consider the following 919-residue polypeptide: Valine--tRNA ligase (919 aa).

The short motif at 66 to 76 (PNVTGQLHMGH) is the 'HIGH' region element. The 'KMSKS' region signature appears at 562 to 566 (KMSKS). Lys565 contacts ATP. Residues 852–919 (TVDKEAERKR…RISARLEELK (68 aa)) adopt a coiled-coil conformation.

The protein belongs to the class-I aminoacyl-tRNA synthetase family. ValS type 1 subfamily. In terms of assembly, monomer.

Its subcellular location is the cytoplasm. The enzyme catalyses tRNA(Val) + L-valine + ATP = L-valyl-tRNA(Val) + AMP + diphosphate. Functionally, catalyzes the attachment of valine to tRNA(Val). As ValRS can inadvertently accommodate and process structurally similar amino acids such as threonine, to avoid such errors, it has a 'posttransfer' editing activity that hydrolyzes mischarged Thr-tRNA(Val) in a tRNA-dependent manner. In Corynebacterium diphtheriae (strain ATCC 700971 / NCTC 13129 / Biotype gravis), this protein is Valine--tRNA ligase.